Reading from the N-terminus, the 389-residue chain is MRFSNFLTVSALLTGALGAPAVRHKHEKRDVVTATVHAQVTVVVSGNSGETIVPVNENAVVATTSSTAVASQATTSTLEPTTSANVVTSQQQTSTLQSSEAASTVGSSTSSSPSSSSSTSSSASSSASSSISASGAKGITYSPYNDDGSCKSTAQVASDLEQLTGFDNIRLYGVDCSQVENVLQAKTSSQKLFLGIYYVDKIQDAVDTIKSAVESYGSWDDITTVSVGNELVNGGSATTTQVGEYVSTAKSALTSAGYTGSVVSVDTFIAVINNPDLCNYSDYMAVNAHAYFDENTAAQDAGPWVLEQIERVYTACGGKKDVVITETGWPSKGDTYGEAVPSKANQEAAISSIKSSCGSSAYLFTAFNDLWKDDGQYGVEKYWGILSSD.

The N-terminal stretch at 1–18 (MRFSNFLTVSALLTGALG) is a signal peptide. A propeptide spanning residues 19–29 (APAVRHKHEKR) is cleaved from the precursor. The tract at residues 70–134 (ASQATTSTLE…SSASSSISAS (65 aa)) is disordered. A glycan (N-linked (GlcNAc...) asparagine) is linked at asparagine 279. Glutamate 326 functions as the Nucleophile in the catalytic mechanism.

This sequence belongs to the glycosyl hydrolase 17 family. In terms of processing, glycosylated.

The protein resides in the secreted. The protein localises to the cell wall. Functionally, glucanases possibly play a role in cell expansion during growth, in cell-cell fusion during mating, and in spore release during sporulation. The polypeptide is Probable family 17 glucosidase SCW10 (SCW10) (Saccharomyces cerevisiae (strain ATCC 204508 / S288c) (Baker's yeast)).